The chain runs to 317 residues: USG-1 protein homolog (317 aa).

Belongs to the aspartate-semialdehyde dehydrogenase family.

The protein is USG-1 protein homolog (usg) of Haemophilus influenzae (strain ATCC 51907 / DSM 11121 / KW20 / Rd).